Here is a 243-residue protein sequence, read N- to C-terminus: Protein S40-7 (243 aa).

Disordered stretches follow at residues 1-68 (MNKN…KSGL) and 107-143 (SSTA…ERLP). Over residues 10-20 (SSPSSLATISD) the composition is skewed to polar residues. Positions 22-32 (ADGELNEDDIF) are enriched in acidic residues. The segment covering 47 to 67 (PVSSPAKQQTPARQLQRSKSG) has biased composition (polar residues).

Belongs to the senescence regulator S40 family.

It is found in the cytoplasm. The polypeptide is Protein S40-7 (Arabidopsis thaliana (Mouse-ear cress)).